Here is a 713-residue protein sequence, read N- to C-terminus: Probable muscarinic acetylcholine receptor gar-1 (713 aa).

Topologically, residues 1-20 are extracellular; sequence MPNYTVPPDPADTSWDSPYS. N-linked (GlcNAc...) asparagine glycosylation occurs at Asn-3. The chain crosses the membrane as a helical span at residues 21 to 41; it reads IPVQIVVWIIIIVLSLETIIG. The Cytoplasmic portion of the chain corresponds to 42-66; the sequence is NAMVVMAYRIERNISKQVSNRYIVS. A helical transmembrane segment spans residues 67–87; the sequence is LAISDLIIGIEGFPFFTVYVL. Topologically, residues 88–101 are extracellular; the sequence is NGDRWPLGWVACQT. A disulfide bridge links Cys-99 with Cys-180. A helical membrane pass occupies residues 102 to 122; it reads WLFLDYTLCLVSILTVLLITA. Topologically, residues 123-144 are cytoplasmic; that stretch reads DRYLSVCHTAKYLKWQSPTKTQ. Residues 145–165 form a helical membrane-spanning segment; it reads LLIVMSWLLPAIIFGIMIYGW. The Extracellular portion of the chain corresponds to 166-189; sequence QAMTGQSTSMSGAECSAPFLSNPY. Residues 190–210 form a helical membrane-spanning segment; the sequence is VNMGMYVAYYWTTLVAMLILY. At 211–633 the chain is on the cytoplasmic side; it reads KGIHQAAKNL…QTKAEKRAHK (423 aa). Disordered regions lie at residues 256–350, 381–403, 427–475, and 515–585; these read KEKA…SRRC, SRYSASESITTTHENDEKEVEKA, KNTD…KQAE, and LIRR…TDTF. 2 stretches are compositionally biased toward polar residues: residues 266–275 and 287–315; these read SGYTSNQAGD and PETSQFRVDPNSNNNLNVEGSLNTENDQN. Composition is skewed to basic and acidic residues over residues 320-333 and 393-403; these read EEERSGFLSRRESN and HENDEKEVEKA. Positions 429 to 439 are enriched in low complexity; it reads TDSNNDSDTTS. The segment covering 444 to 457 has biased composition (basic residues); sequence RSRKYKKNKRPRSS. Residues 557–571 show a composition bias toward polar residues; sequence LTVNNENRGETSSQP. Residues 634–656 traverse the membrane as a helical segment; that stretch reads AFRTITFIVGFFAILWSPYYIMA. Residues 657-670 are Extracellular-facing; that stretch reads TVYGFCKGECIPSF. A helical membrane pass occupies residues 671-693; it reads LYTLSYYMCYLNSSGNPFAYALA. The Cytoplasmic segment spans residues 694–713; it reads NRQFRSAFMRMFRGNFNKVA.

It belongs to the G-protein coupled receptor 1 family. Muscarinic acetylcholine receptor subfamily. In terms of tissue distribution, expressed in head region of the larva. In adults, expression is seen in the periventricularis magnocellularis (PVM) neuron.

The protein localises to the cell membrane. Its function is as follows. The muscarinic acetylcholine receptor mediates various cellular responses, including inhibition of adenylate cyclase, breakdown of phosphoinositides and modulation of potassium channels through the action of G proteins. Primary transducing effect is Pi turnover. In Caenorhabditis elegans, this protein is Probable muscarinic acetylcholine receptor gar-1 (gar-1).